We begin with the raw amino-acid sequence, 222 residues long: Large ribosomal subunit protein uL1 (222 aa).

It belongs to the universal ribosomal protein uL1 family. Part of the 50S ribosomal subunit.

Functionally, binds directly to 23S rRNA. Probably involved in E site tRNA release. In terms of biological role, protein L1 is also a translational repressor protein, it controls the translation of its operon by binding to its mRNA. The protein is Large ribosomal subunit protein uL1 of Pyrobaculum calidifontis (strain DSM 21063 / JCM 11548 / VA1).